A 134-amino-acid polypeptide reads, in one-letter code: ATP synthase epsilon chain (134 aa).

The protein belongs to the ATPase epsilon chain family. As to quaternary structure, F-type ATPases have 2 components, CF(1) - the catalytic core - and CF(0) - the membrane proton channel. CF(1) has five subunits: alpha(3), beta(3), gamma(1), delta(1), epsilon(1). CF(0) has three main subunits: a, b and c.

It localises to the cell membrane. Produces ATP from ADP in the presence of a proton gradient across the membrane. The chain is ATP synthase epsilon chain from Clostridium botulinum (strain Eklund 17B / Type B).